The following is a 3587-amino-acid chain: Tyrocidine synthase 2 (3587 aa).

The tract at residues 466 to 1045 is domain 1 (Proline-activating); it reads AATMHELFSR…IQALAAYVEG (580 aa). Carrier domains are found at residues 972–1047 and 2007–2082; these read APTT…EGGE and APAT…EHSE. O-(pantetheine 4'-phosphoryl)serine occurs at positions 1007 and 2042. Residues 1522–2081 are domain 2 (Phenylalanine-activating); sequence EQTAVVFGDK…RDLARLIEHS (560 aa). Residues 2540–3122 are domain 3 (D-phenylalanine-activating); that stretch reads YRADQTIQQL…NSRESEQGVV (583 aa). The interval 3017–3040 is disordered; it reads NDKIDRKALPKPNQEENRTEQYAA. The span at 3018–3035 shows a compositional bias: basic and acidic residues; it reads DKIDRKALPKPNQEENRT. Positions 3040 to 3114 constitute a Carrier 3 domain; that stretch reads APQTELEQLL…EAALRVIPNS (75 aa). The residue at position 3075 (Ser3075) is an O-(pantetheine 4'-phosphoryl)serine.

It belongs to the ATP-dependent AMP-binding enzyme family. As to quaternary structure, large multienzyme complex of TycA, TycB and TycC. Requires pantetheine 4'-phosphate as cofactor.

The enzyme catalyses L-phenylalanine + ATP + H2O = D-phenylalanine + AMP + diphosphate + H(+). The protein operates within antibiotic biosynthesis; tyrocidine biosynthesis. Its function is as follows. Activates the second to fourth amino acids in tyrocidine (in tyrocidine A, Pro, Phe, and D-Phe) and epimerizes the last one. This is Tyrocidine synthase 2 (tycB) from Brevibacillus parabrevis.